A 45-amino-acid polypeptide reads, in one-letter code: Large ribosomal subunit protein bL34 (45 aa).

It belongs to the bacterial ribosomal protein bL34 family.

The chain is Large ribosomal subunit protein bL34 from Frankia casuarinae (strain DSM 45818 / CECT 9043 / HFP020203 / CcI3).